A 108-amino-acid chain; its full sequence is CRISPR-associated endoribonuclease Cas2 (108 aa).

Aspartate 15 contacts Mg(2+).

It belongs to the CRISPR-associated endoribonuclease Cas2 protein family. As to quaternary structure, homodimer, forms a heterotetramer with a Cas1 homodimer. It depends on Mg(2+) as a cofactor.

Its function is as follows. CRISPR (clustered regularly interspaced short palindromic repeat), is an adaptive immune system that provides protection against mobile genetic elements (viruses, transposable elements and conjugative plasmids). CRISPR clusters contain sequences complementary to antecedent mobile elements and target invading nucleic acids. CRISPR clusters are transcribed and processed into CRISPR RNA (crRNA). Functions as a ssRNA-specific endoribonuclease. Involved in the integration of spacer DNA into the CRISPR cassette. The protein is CRISPR-associated endoribonuclease Cas2 of Paracidovorax avenae (strain ATCC 19860 / DSM 7227 / CCUG 15838 / JCM 20985 / LMG 2117 / NCPPB 1011) (Acidovorax avenae).